A 25-amino-acid chain; its full sequence is Small ribosomal subunit protein eS32 (25 aa).

The segment at 1–25 (MREKWKKKRSRRLRRKRRKMRARSK) is disordered.

Belongs to the eukaryotic ribosomal protein eS32 family. As to quaternary structure, component of the large ribosomal subunit.

The chain is Small ribosomal subunit protein eS32 (rpl41) from Agaricus bisporus (White button mushroom).